A 215-amino-acid polypeptide reads, in one-letter code: Small ribosomal subunit protein uS3c (215 aa).

A KH type-2 domain is found at 43-116 (IKNYIKKNMK…KLNMAITRIA (74 aa)).

The protein belongs to the universal ribosomal protein uS3 family. Part of the 30S ribosomal subunit.

The protein resides in the plastid. Its subcellular location is the chloroplast. The protein is Small ribosomal subunit protein uS3c (rps3) of Morus indica (Mulberry).